The chain runs to 41 residues: Photosystem II reaction center protein Y (41 aa).

A helical transmembrane segment spans residues 4-22 (LIVVVLPILAAVTWVVFNI).

Belongs to the PsbY family. In terms of assembly, PSII is composed of 1 copy each of membrane proteins PsbA, PsbB, PsbC, PsbD, PsbE, PsbF, PsbH, PsbI, PsbJ, PsbK, PsbL, PsbM, PsbT, PsbX, PsbY, Psb30/Ycf12, peripheral proteins PsbO, CyanoQ (PsbQ), PsbU, PsbV and a large number of cofactors. It forms dimeric complexes.

Its subcellular location is the cellular thylakoid membrane. Its function is as follows. Loosely associated component of the core of photosystem II (PSII), it is not always seen in crystals. PSII is a light-driven water plastoquinone oxidoreductase, using light energy to abstract electrons from H(2)O, generating a proton gradient subsequently used for ATP formation. The protein is Photosystem II reaction center protein Y of Prochlorococcus marinus (strain MIT 9211).